The chain runs to 449 residues: MFS acetylaranotin efflux transporter ataA (449 aa).

7 helical membrane-spanning segments follow: residues S6 to P26, Y45 to I65, W67 to P87, F115 to V135, L155 to G175, N182 to I202, and L227 to F247. N252 is a glycosylation site (N-linked (GlcNAc...) asparagine). The next 5 helical transmembrane spans lie at I260–V280, V287–F307, V321–V341, V349–A369, and A420–V440.

It belongs to the major facilitator superfamily.

Its subcellular location is the cell membrane. Its function is as follows. Efflux pump that may provide the dual role of acetylaranotin export and self-protection by allowing the fungus to evade the harmful effect of its own acetylaranotin production. This chain is MFS acetylaranotin efflux transporter ataA, found in Aspergillus terreus (strain NIH 2624 / FGSC A1156).